Here is a 551-residue protein sequence, read N- to C-terminus: 2-(3-amino-3-carboxypropyl)histidine synthase subunit 2 (551 aa).

Cys-116, Cys-137, and Cys-371 together coordinate [4Fe-4S] cluster.

Belongs to the DPH1/DPH2 family. DPH2 subfamily. As to quaternary structure, component of the 2-(3-amino-3-carboxypropyl)histidine synthase complex composed of DPH1, DPH2, DPH3 and a NADH-dependent reductase, predominantly CBR1. It depends on [4Fe-4S] cluster as a cofactor.

The protein localises to the cytoplasm. It participates in protein modification; peptidyl-diphthamide biosynthesis. In terms of biological role, required for the first step of diphthamide biosynthesis, a post-translational modification of histidine which occurs in elongation factor 2. DPH1 and DPH2 transfer a 3-amino-3-carboxypropyl (ACP) group from S-adenosyl-L-methionine (SAM) to a histidine residue, the reaction is assisted by a reduction system comprising DPH3 and a NADH-dependent reductase, predominantly CBR1. Facilitates the reduction of the catalytic iron-sulfur cluster found in the DPH1 subunit. This chain is 2-(3-amino-3-carboxypropyl)histidine synthase subunit 2 (DPH2), found in Candida glabrata (strain ATCC 2001 / BCRC 20586 / JCM 3761 / NBRC 0622 / NRRL Y-65 / CBS 138) (Yeast).